The following is a 144-amino-acid chain: D-aminoacyl-tRNA deacylase (144 aa).

Positions 136–137 match the Gly-cisPro motif, important for rejection of L-amino acids motif; it reads GP.

It belongs to the DTD family. Homodimer.

The protein localises to the cytoplasm. It catalyses the reaction glycyl-tRNA(Ala) + H2O = tRNA(Ala) + glycine + H(+). The catalysed reaction is a D-aminoacyl-tRNA + H2O = a tRNA + a D-alpha-amino acid + H(+). Its function is as follows. An aminoacyl-tRNA editing enzyme that deacylates mischarged D-aminoacyl-tRNAs. Also deacylates mischarged glycyl-tRNA(Ala), protecting cells against glycine mischarging by AlaRS. Acts via tRNA-based rather than protein-based catalysis; rejects L-amino acids rather than detecting D-amino acids in the active site. By recycling D-aminoacyl-tRNA to D-amino acids and free tRNA molecules, this enzyme counteracts the toxicity associated with the formation of D-aminoacyl-tRNA entities in vivo and helps enforce protein L-homochirality. In Corynebacterium efficiens (strain DSM 44549 / YS-314 / AJ 12310 / JCM 11189 / NBRC 100395), this protein is D-aminoacyl-tRNA deacylase.